Reading from the N-terminus, the 650-residue chain is Macrolide export ATP-binding/permease protein MacB (650 aa).

The ABC transporter domain maps to 2–238 (IDIKGIRKSY…PTTAQEKRQE (237 aa)). 38-45 (GPSGSGKS) contributes to the ATP binding site. 4 helical membrane passes run 267–287 (GLSMLGILIGVAAVVGMLALG), 531–551 (IAAISLVVGGIGIMNIMLVSV), 580–600 (IVVSVCGGLLGIALGVGFSLL), and 610–630 (VVSAGSVILSFGFSALIGIVF).

It belongs to the ABC transporter superfamily. Macrolide exporter (TC 3.A.1.122) family. Homodimer.

It localises to the cell inner membrane. In terms of biological role, non-canonical ABC transporter that contains transmembrane domains (TMD), which form a pore in the inner membrane, and an ATP-binding domain (NBD), which is responsible for energy generation. Confers resistance against macrolides. The chain is Macrolide export ATP-binding/permease protein MacB from Bdellovibrio bacteriovorus (strain ATCC 15356 / DSM 50701 / NCIMB 9529 / HD100).